Consider the following 229-residue polypeptide: Uracil-DNA glycosylase (229 aa).

D65 acts as the Proton acceptor in catalysis.

It belongs to the uracil-DNA glycosylase (UDG) superfamily. UNG family.

It is found in the cytoplasm. The catalysed reaction is Hydrolyzes single-stranded DNA or mismatched double-stranded DNA and polynucleotides, releasing free uracil.. Its function is as follows. Excises uracil residues from the DNA which can arise as a result of misincorporation of dUMP residues by DNA polymerase or due to deamination of cytosine. This chain is Uracil-DNA glycosylase, found in Oceanobacillus iheyensis (strain DSM 14371 / CIP 107618 / JCM 11309 / KCTC 3954 / HTE831).